The following is a 246-amino-acid chain: 1-(5-phosphoribosyl)-5-[(5-phosphoribosylamino)methylideneamino] imidazole-4-carboxamide isomerase (246 aa).

Aspartate 8 functions as the Proton acceptor in the catalytic mechanism. Aspartate 129 serves as the catalytic Proton donor.

The protein belongs to the HisA/HisF family.

The protein localises to the cytoplasm. It carries out the reaction 1-(5-phospho-beta-D-ribosyl)-5-[(5-phospho-beta-D-ribosylamino)methylideneamino]imidazole-4-carboxamide = 5-[(5-phospho-1-deoxy-D-ribulos-1-ylimino)methylamino]-1-(5-phospho-beta-D-ribosyl)imidazole-4-carboxamide. Its pathway is amino-acid biosynthesis; L-histidine biosynthesis; L-histidine from 5-phospho-alpha-D-ribose 1-diphosphate: step 4/9. This is 1-(5-phosphoribosyl)-5-[(5-phosphoribosylamino)methylideneamino] imidazole-4-carboxamide isomerase from Nitrobacter hamburgensis (strain DSM 10229 / NCIMB 13809 / X14).